We begin with the raw amino-acid sequence, 367 residues long: UDP-N-acetylglucosamine--N-acetylmuramyl-(pentapeptide) pyrophosphoryl-undecaprenol N-acetylglucosamine transferase (367 aa).

Residues 15 to 17 (TGG), N127, R163, S191, I249, and Q294 contribute to the UDP-N-acetyl-alpha-D-glucosamine site.

This sequence belongs to the glycosyltransferase 28 family. MurG subfamily.

The protein resides in the cell inner membrane. The catalysed reaction is di-trans,octa-cis-undecaprenyl diphospho-N-acetyl-alpha-D-muramoyl-L-alanyl-D-glutamyl-meso-2,6-diaminopimeloyl-D-alanyl-D-alanine + UDP-N-acetyl-alpha-D-glucosamine = di-trans,octa-cis-undecaprenyl diphospho-[N-acetyl-alpha-D-glucosaminyl-(1-&gt;4)]-N-acetyl-alpha-D-muramoyl-L-alanyl-D-glutamyl-meso-2,6-diaminopimeloyl-D-alanyl-D-alanine + UDP + H(+). Its pathway is cell wall biogenesis; peptidoglycan biosynthesis. In terms of biological role, cell wall formation. Catalyzes the transfer of a GlcNAc subunit on undecaprenyl-pyrophosphoryl-MurNAc-pentapeptide (lipid intermediate I) to form undecaprenyl-pyrophosphoryl-MurNAc-(pentapeptide)GlcNAc (lipid intermediate II). This chain is UDP-N-acetylglucosamine--N-acetylmuramyl-(pentapeptide) pyrophosphoryl-undecaprenol N-acetylglucosamine transferase, found in Burkholderia vietnamiensis (strain G4 / LMG 22486) (Burkholderia cepacia (strain R1808)).